We begin with the raw amino-acid sequence, 488 residues long: MEKSWFNFLFSKGELEYRCELSKSMDSFAPIEKTPISQDRAIYDTDKNLYDWGERSSYYNNVDLLVSSKDIRNFISDDTFFVRDSNKNSYSIYFDIQNQKFEIGNGLSDLEVFFYSYRSSSYLNNRSKSDNDPHYDPSIKDTKYDCNNHINSCIDSYFRSHICIDSHFLSDSKNYNESYIYNLICSKSEKIRESQNCKIRTNMNRSDLIQDFDITQNYNQLWIQCDNCYALIYKKALKLKLNVCEQCGYYLKISSSDRIELSIDPGTWNPMDEDMVSTDPIQFHSREEPYQNRIDSAQKKTGLTDAVQTGTGQLNGIPVALGVMDFQFMGGSMGSVVGEKITRLIEYATTEFLPLILVCSSGGARMQEGSLSLMQMAKISSVLCDYQSSKKLFYISILTSPTTGGVTASFGMLGDIIIAEPYAYIAFAGKRVIEQTLKKAVPEGSQAAESLLRKGLLDAIVPRNLLKGVLTELFQLHAFFPLNKNEIK.

Positions 221–488 (LWIQCDNCYA…FFPLNKNEIK (268 aa)) constitute a CoA carboxyltransferase N-terminal domain. 4 residues coordinate Zn(2+): Cys225, Cys228, Cys244, and Cys247. The C4-type zinc finger occupies 225–247 (CDNCYALIYKKALKLKLNVCEQC).

This sequence belongs to the AccD/PCCB family. Acetyl-CoA carboxylase is a heterohexamer composed of biotin carboxyl carrier protein, biotin carboxylase and 2 subunits each of ACCase subunit alpha and ACCase plastid-coded subunit beta (accD). Requires Zn(2+) as cofactor.

Its subcellular location is the plastid. The protein resides in the chloroplast stroma. It carries out the reaction N(6)-carboxybiotinyl-L-lysyl-[protein] + acetyl-CoA = N(6)-biotinyl-L-lysyl-[protein] + malonyl-CoA. It functions in the pathway lipid metabolism; malonyl-CoA biosynthesis; malonyl-CoA from acetyl-CoA: step 1/1. Functionally, component of the acetyl coenzyme A carboxylase (ACC) complex. Biotin carboxylase (BC) catalyzes the carboxylation of biotin on its carrier protein (BCCP) and then the CO(2) group is transferred by the transcarboxylase to acetyl-CoA to form malonyl-CoA. In Aethionema grandiflorum (Persian stone-cress), this protein is Acetyl-coenzyme A carboxylase carboxyl transferase subunit beta, chloroplastic.